The following is a 96-amino-acid chain: Co-chaperonin GroES (96 aa).

It belongs to the GroES chaperonin family. Heptamer of 7 subunits arranged in a ring. Interacts with the chaperonin GroEL.

The protein localises to the cytoplasm. Together with the chaperonin GroEL, plays an essential role in assisting protein folding. The GroEL-GroES system forms a nano-cage that allows encapsulation of the non-native substrate proteins and provides a physical environment optimized to promote and accelerate protein folding. GroES binds to the apical surface of the GroEL ring, thereby capping the opening of the GroEL channel. This is Co-chaperonin GroES from Shewanella halifaxensis (strain HAW-EB4).